The chain runs to 492 residues: Cytoplasmic dynein 1 light intermediate chain 2 (492 aa).

61–68 (GEDGSGKT) lines the ATP pocket. Disordered regions lie at residues 188–207 (EEGC…GSDE), 370–423 (LAKQ…KNNA), and 437–492 (LSKK…ENEA). Ser194, Ser383, and Ser391 each carry phosphoserine. Polar residues predominate over residues 370-383 (LAKQPATPTRTSES). Position 397 is an omega-N-methylarginine (Arg397). A compositionally biased stretch (polar residues) spans 437–469 (LSKKTGSPGSPSAGGVQSTAKKSGQKTVLSNVQ). Thr441 is subject to Phosphothreonine. 2 positions are modified to phosphoserine: Ser443 and Ser446. The segment covering 471–480 (ELDRMTRKPD) has biased composition (basic and acidic residues). Positions 482–492 (MVTNSSTENEA) are enriched in polar residues.

This sequence belongs to the dynein light intermediate chain family. Homodimer. The cytoplasmic dynein 1 complex consists of two catalytic heavy chains (HCs) and a number of non-catalytic subunits presented by intermediate chains (ICs), light intermediate chains (LICs) and light chains (LCs); the composition seems to vary in respect to the IC, LIC and LC composition. The heavy chain homodimer serves as a scaffold for the probable homodimeric assembly of the respective non-catalytic subunits. The ICs and LICs bind directly to the HC dimer and the LCs assemble on the IC dimer. Interacts with DYNC1H1; DYNC1LI1 and DYNC1LI2 bind mutually exclusive to DYNC1H.

The protein localises to the cytoplasm. It is found in the cytoskeleton. In terms of biological role, acts as one of several non-catalytic accessory components of the cytoplasmic dynein 1 complex that are thought to be involved in linking dynein to cargos and to adapter proteins that regulate dynein function. Cytoplasmic dynein 1 acts as a motor for the intracellular retrograde motility of vesicles and organelles along microtubules. May play a role in binding dynein to membranous organelles or chromosomes. This chain is Cytoplasmic dynein 1 light intermediate chain 2 (Dync1li2), found in Mus musculus (Mouse).